A 1368-amino-acid polypeptide reads, in one-letter code: DNA-directed RNA polymerase subunit beta (1368 aa).

This sequence belongs to the RNA polymerase beta chain family. In terms of assembly, the RNAP catalytic core consists of 2 alpha, 1 beta, 1 beta' and 1 omega subunit. When a sigma factor is associated with the core the holoenzyme is formed, which can initiate transcription.

It catalyses the reaction RNA(n) + a ribonucleoside 5'-triphosphate = RNA(n+1) + diphosphate. Functionally, DNA-dependent RNA polymerase catalyzes the transcription of DNA into RNA using the four ribonucleoside triphosphates as substrates. The chain is DNA-directed RNA polymerase subunit beta from Cupriavidus metallidurans (strain ATCC 43123 / DSM 2839 / NBRC 102507 / CH34) (Ralstonia metallidurans).